An 89-amino-acid polypeptide reads, in one-letter code: Arminin 375 (89 aa).

The signal sequence occupies residues 1–18; sequence MKAVFAILFLAFIALTYA. Positions 19 to 57 are excised as a propeptide; it reads KSYDEVKEEIKNEVEREIFEDLEEESDELDNYVEESNDA. Ala-86 is subject to Alanine amide.

The protein belongs to the arminin family. Expressed in entodermal epithelium along the body column.

The protein localises to the secreted. It localises to the target cell membrane. Its function is as follows. Antimicrobial peptide with a broad-spectrum antimicrobial activity. Keeps its antibacterial activity under a wide range of salt concentrations that mimic physiological conditions of human blood, which is surprising, since Hydra is an obligate freshwater animal with nearly no salt tolerance. Does not affect red blood cells. The polypeptide is Arminin 375 (Hydra oligactis (Brown hydra)).